The primary structure comprises 388 residues: DNA ADP-ribosyl transferase-DNA ADP-ribosyl glycohydrolase fusion protein (388 aa).

Residues 6-197 enclose the DarT domain; that stretch reads RELYYITHID…PVIPDPTFFF (192 aa). NAD(+)-binding positions include 10–12 and Arg-50; that span reads YIT. The tract at residues 34–52 is NAD(+)-binding element; the sequence is QSINCKKVYDNSIVLKRKS. Arg-50 (proton acceptor) is an active-site residue. The ADP-ribosylating turn-turn loop stretch occupies residues 107-152; sequence TDGNAASSETQIYRKSEIKNIKNIISVKDMEYWREEDGSKRKIMAE. Residue Glu-152 is part of the active site. Residues 196–376 form the Macro domain; the sequence is FFLPNREIKL…IYLPLEKRIP (181 aa). Residues 215–216, 227–229, Thr-301, 339–343, and 371–372 each bind ADP-D-ribose; these read DM, SVN, GCGLG, and LE.

It in the N-terminal section; belongs to the DarT ADP-ribosyltransferase family. This sequence in the C-terminal section; belongs to the DarG ADP-ribosyl glycohydrolase family.

It carries out the reaction an N-(ADP-alpha-D-ribosyl)-thymidine in DNA + H2O = a thymidine in DNA + ADP-D-ribose. The enzyme catalyses a thymidine in DNA + NAD(+) = an N-(ADP-alpha-D-ribosyl)-thymidine in DNA + nicotinamide + H(+). A fusion protein of the toxic and antitoxin components of a hybrid type II/IV toxin-antitoxin (TA) system. The N-terminal domain ADP-ribosylates ssDNA on a thymidine residue, while the C-terminal domain removes the modification, neutralizing the toxic effect. The protein is DNA ADP-ribosyl transferase-DNA ADP-ribosyl glycohydrolase fusion protein of Thermosipho africanus (strain H17ap60334).